Here is a 120-residue protein sequence, read N- to C-terminus: NAD(P)H-quinone oxidoreductase subunit 3, chloroplastic (120 aa).

3 helical membrane-spanning segments follow: residues I9–G29, M64–M84, and V88–S108.

The protein belongs to the complex I subunit 3 family. In terms of assembly, NDH is composed of at least 16 different subunits, 5 of which are encoded in the nucleus.

It localises to the plastid. The protein resides in the chloroplast thylakoid membrane. The enzyme catalyses a plastoquinone + NADH + (n+1) H(+)(in) = a plastoquinol + NAD(+) + n H(+)(out). The catalysed reaction is a plastoquinone + NADPH + (n+1) H(+)(in) = a plastoquinol + NADP(+) + n H(+)(out). NDH shuttles electrons from NAD(P)H:plastoquinone, via FMN and iron-sulfur (Fe-S) centers, to quinones in the photosynthetic chain and possibly in a chloroplast respiratory chain. The immediate electron acceptor for the enzyme in this species is believed to be plastoquinone. Couples the redox reaction to proton translocation, and thus conserves the redox energy in a proton gradient. This is NAD(P)H-quinone oxidoreductase subunit 3, chloroplastic from Vitis vinifera (Grape).